Here is a 213-residue protein sequence, read N- to C-terminus: ATP-dependent dethiobiotin synthetase BioD (213 aa).

13–18 contacts ATP; it reads GIGKTV. Threonine 17 serves as a coordination point for Mg(2+). Lysine 33 is an active-site residue. Glutamate 100 provides a ligand contact to Mg(2+). ATP-binding positions include 100-103 and 184-186; these read EGAG and PRL.

It belongs to the dethiobiotin synthetase family. In terms of assembly, homodimer. It depends on Mg(2+) as a cofactor.

Its subcellular location is the cytoplasm. The enzyme catalyses (7R,8S)-7,8-diammoniononanoate + CO2 + ATP = (4R,5S)-dethiobiotin + ADP + phosphate + 3 H(+). It functions in the pathway cofactor biosynthesis; biotin biosynthesis; biotin from 7,8-diaminononanoate: step 1/2. In terms of biological role, catalyzes a mechanistically unusual reaction, the ATP-dependent insertion of CO2 between the N7 and N8 nitrogen atoms of 7,8-diaminopelargonic acid (DAPA, also called 7,8-diammoniononanoate) to form a ureido ring. The protein is ATP-dependent dethiobiotin synthetase BioD of Rhodopseudomonas palustris (strain HaA2).